Here is a 463-residue protein sequence, read N- to C-terminus: UDP-N-acetylmuramoyl-L-alanyl-D-glutamate--2,6-diaminopimelate ligase (463 aa).

Thr-21 is a UDP-N-acetyl-alpha-D-muramoyl-L-alanyl-D-glutamate binding site. 94 to 100 (GTNGKTT) serves as a coordination point for ATP. Residues 137 to 138 (TT), Ser-164, Gln-170, and Arg-172 contribute to the UDP-N-acetyl-alpha-D-muramoyl-L-alanyl-D-glutamate site. Residue Lys-204 is modified to N6-carboxylysine. Residues Arg-358, 382 to 385 (DNPR), Gly-433, and Glu-437 contribute to the meso-2,6-diaminopimelate site. The Meso-diaminopimelate recognition motif signature appears at 382-385 (DNPR).

It belongs to the MurCDEF family. MurE subfamily. Mg(2+) serves as cofactor. In terms of processing, carboxylation is probably crucial for Mg(2+) binding and, consequently, for the gamma-phosphate positioning of ATP.

It localises to the cytoplasm. The enzyme catalyses UDP-N-acetyl-alpha-D-muramoyl-L-alanyl-D-glutamate + meso-2,6-diaminopimelate + ATP = UDP-N-acetyl-alpha-D-muramoyl-L-alanyl-gamma-D-glutamyl-meso-2,6-diaminopimelate + ADP + phosphate + H(+). The protein operates within cell wall biogenesis; peptidoglycan biosynthesis. Its function is as follows. Catalyzes the addition of meso-diaminopimelic acid to the nucleotide precursor UDP-N-acetylmuramoyl-L-alanyl-D-glutamate (UMAG) in the biosynthesis of bacterial cell-wall peptidoglycan. The polypeptide is UDP-N-acetylmuramoyl-L-alanyl-D-glutamate--2,6-diaminopimelate ligase (Helicobacter hepaticus (strain ATCC 51449 / 3B1)).